Consider the following 508-residue polypeptide: Cyclin-A1-1 (508 aa).

The segment covering 1 to 28 (MSSNLAASRRSSSSSSVAAAAAAKRPAV) has biased composition (low complexity). Disordered stretches follow at residues 1 to 40 (MSSN…GKAA) and 82 to 125 (VKKG…ESVL). The segment covering 29–39 (GEGGGGGGGKA) has biased composition (gly residues). The span at 98–111 (ASAVKSASAKPAPA) shows a compositional bias: low complexity.

It belongs to the cyclin family. Cyclin AB subfamily. As to expression, expressed in the dividing region of the root cap and root apex. Expressed in the intercalary meristem of internodes and in adventitious roots under submergence conditions.

Functionally, involved in the control of the cell cycle at the G2/M (mitosis) transition. This is Cyclin-A1-1 (CYCA1-1) from Oryza sativa subsp. japonica (Rice).